Reading from the N-terminus, the 293-residue chain is Formamidopyrimidine-DNA glycosylase (293 aa).

Catalysis depends on Pro2, which acts as the Schiff-base intermediate with DNA. Residue Glu3 is the Proton donor of the active site. The Proton donor; for beta-elimination activity role is filled by Lys60. 3 residues coordinate DNA: His110, Arg129, and Lys174. The FPG-type zinc-finger motif lies at 259 to 293; the sequence is NVYRRTGKKCHACKNLIERQKISGRSTHWCRKCQK. Catalysis depends on Arg283, which acts as the Proton donor; for delta-elimination activity.

Belongs to the FPG family. Monomer. Requires Zn(2+) as cofactor.

The enzyme catalyses Hydrolysis of DNA containing ring-opened 7-methylguanine residues, releasing 2,6-diamino-4-hydroxy-5-(N-methyl)formamidopyrimidine.. It carries out the reaction 2'-deoxyribonucleotide-(2'-deoxyribose 5'-phosphate)-2'-deoxyribonucleotide-DNA = a 3'-end 2'-deoxyribonucleotide-(2,3-dehydro-2,3-deoxyribose 5'-phosphate)-DNA + a 5'-end 5'-phospho-2'-deoxyribonucleoside-DNA + H(+). Its function is as follows. Involved in base excision repair of DNA damaged by oxidation or by mutagenic agents. Acts as a DNA glycosylase that recognizes and removes damaged bases. Has a preference for oxidized purines, such as 7,8-dihydro-8-oxoguanine (8-oxoG). Has AP (apurinic/apyrimidinic) lyase activity and introduces nicks in the DNA strand. Cleaves the DNA backbone by beta-delta elimination to generate a single-strand break at the site of the removed base with both 3'- and 5'-phosphates. This Prochlorococcus marinus (strain MIT 9515) protein is Formamidopyrimidine-DNA glycosylase.